Consider the following 358-residue polypeptide: 3-dehydroquinate synthase (358 aa).

Residues 70-75, 104-108, 128-129, Lys141, Lys150, and 168-171 each bind NAD(+); these read DGEQYK, GVVGD, TT, and CLNT. Zn(2+) is bound by residues Glu183, His246, and His263.

The protein belongs to the sugar phosphate cyclases superfamily. Dehydroquinate synthase family. It depends on Co(2+) as a cofactor. Zn(2+) serves as cofactor. Requires NAD(+) as cofactor.

The protein resides in the cytoplasm. It carries out the reaction 7-phospho-2-dehydro-3-deoxy-D-arabino-heptonate = 3-dehydroquinate + phosphate. Its pathway is metabolic intermediate biosynthesis; chorismate biosynthesis; chorismate from D-erythrose 4-phosphate and phosphoenolpyruvate: step 2/7. Catalyzes the conversion of 3-deoxy-D-arabino-heptulosonate 7-phosphate (DAHP) to dehydroquinate (DHQ). In Shewanella sediminis (strain HAW-EB3), this protein is 3-dehydroquinate synthase.